We begin with the raw amino-acid sequence, 504 residues long: MIFKAVRVPFKSGRFAVILNEEDASELGVREGDRVRVRYGKAGVVATVQITREIVEKGFVGLTDLASMELGISDGAEVDVFPSPKPKSVELIKKKTRGEKLSQDEIRRIVEDITNNALSEVELTAFVISSMLRGMDFDEIEWLTRSMIETGERIEFDRGTVVDKHSIGGVPGNKISLLIVPTVAAAGLLIPKTASRAITSASGTADTMEVLANVNLSVDEIKEITERVGGVIAWGGATNIAPADDKIIRVEHPLSIDPRPQLLASVMAKKGSVGAKHVVIDIPVGEGAKIEKVEVGRSLANDFIELGRRLGLNVMAAITYGGQPVGRAIGPALEAREALKTMEDRRGPSSLVEKSLGIAGILFEMTGIATNGYQHARKIFESGKTLEKFREIVAAQGGDESVKAEDVAVGDKTYTLTSQVEGAVVSVNNKSIVKIARTAGAPKDKGAGVYVHKKRGEVVKVGDPLLTIYAEKEWKLDNAIEVANTERPIVVSGMVLEVYGRRGV.

AMP-binding positions include Gly169, 195-200 (SRAITS), and Thr204. Asp257 functions as the Proton donor in the catalytic mechanism. The AMP site is built by Ser265 and Lys289.

Belongs to the thymidine/pyrimidine-nucleoside phosphorylase family. Type 2 subfamily.

The catalysed reaction is AMP + phosphate = alpha-D-ribose 1,5-bisphosphate + adenine. It catalyses the reaction CMP + phosphate = cytosine + alpha-D-ribose 1,5-bisphosphate. The enzyme catalyses UMP + phosphate = alpha-D-ribose 1,5-bisphosphate + uracil. In terms of biological role, catalyzes the conversion of AMP and phosphate to adenine and ribose 1,5-bisphosphate (R15P). Exhibits phosphorylase activity toward CMP and UMP in addition to AMP. Functions in an archaeal AMP degradation pathway, together with R15P isomerase and RubisCO. This Archaeoglobus fulgidus (strain ATCC 49558 / DSM 4304 / JCM 9628 / NBRC 100126 / VC-16) protein is AMP phosphorylase 1.